A 468-amino-acid polypeptide reads, in one-letter code: UDP-N-acetylmuramoyl-L-alanine--L-glutamate ligase (468 aa).

122–128 (GTKGKST) contributes to the ATP binding site.

Belongs to the MurCDEF family. MurD2 subfamily.

The protein resides in the cytoplasm. It catalyses the reaction UDP-N-acetyl-alpha-D-muramoyl-L-alanine + L-glutamate + ATP = UDP-N-acetyl-alpha-D-muramoyl-L-alanyl-L-glutamate + ADP + phosphate + H(+). It functions in the pathway cell wall biogenesis; peptidoglycan biosynthesis. Its function is as follows. Cell wall formation. Catalyzes the addition of L-glutamate to the nucleotide precursor UDP-N-acetylmuramoyl-L-alanine. This is UDP-N-acetylmuramoyl-L-alanine--L-glutamate ligase from Xylella fastidiosa (strain 9a5c).